The chain runs to 185 residues: Large ribosomal subunit protein uL5 (185 aa).

The protein belongs to the universal ribosomal protein uL5 family. In terms of assembly, part of the 50S ribosomal subunit; part of the 5S rRNA/L5/L18/L25 subcomplex. Contacts the 5S rRNA and the P site tRNA. Forms a bridge to the 30S subunit in the 70S ribosome.

In terms of biological role, this is one of the proteins that bind and probably mediate the attachment of the 5S RNA into the large ribosomal subunit, where it forms part of the central protuberance. In the 70S ribosome it contacts protein S13 of the 30S subunit (bridge B1b), connecting the 2 subunits; this bridge is implicated in subunit movement. Contacts the P site tRNA; the 5S rRNA and some of its associated proteins might help stabilize positioning of ribosome-bound tRNAs. This chain is Large ribosomal subunit protein uL5, found in Rhizobium johnstonii (strain DSM 114642 / LMG 32736 / 3841) (Rhizobium leguminosarum bv. viciae).